The sequence spans 128 residues: Small ribosomal subunit protein uS9c (128 aa).

Belongs to the universal ribosomal protein uS9 family.

The protein localises to the plastid. The polypeptide is Small ribosomal subunit protein uS9c (rps9) (Euglena longa (Euglenophycean alga)).